We begin with the raw amino-acid sequence, 336 residues long: Dihydroorotate dehydrogenase (quinone) (336 aa).

FMN contacts are provided by residues 62–66 and threonine 86; that span reads AGLDK. Lysine 66 lines the substrate pocket. Residue 111–115 coordinates substrate; that stretch reads NRMGF. FMN is bound by residues asparagine 139 and asparagine 172. Asparagine 172 lines the substrate pocket. The active-site Nucleophile is the serine 175. A substrate-binding site is contributed by asparagine 177. Residues lysine 217 and threonine 245 each contribute to the FMN site. 246–247 contacts substrate; it reads NT. Residues glycine 268, glycine 297, and 318–319 contribute to the FMN site; that span reads YS.

Belongs to the dihydroorotate dehydrogenase family. Type 2 subfamily. As to quaternary structure, monomer. The cofactor is FMN.

The protein resides in the cell membrane. The enzyme catalyses (S)-dihydroorotate + a quinone = orotate + a quinol. The protein operates within pyrimidine metabolism; UMP biosynthesis via de novo pathway; orotate from (S)-dihydroorotate (quinone route): step 1/1. Its function is as follows. Catalyzes the conversion of dihydroorotate to orotate with quinone as electron acceptor. The sequence is that of Dihydroorotate dehydrogenase (quinone) from Psychromonas ingrahamii (strain DSM 17664 / CCUG 51855 / 37).